The primary structure comprises 172 residues: Melanocortin-2 receptor accessory protein (172 aa).

A helical transmembrane segment spans residues 38–58; that stretch reads IVIAFWVSLAAFVVLLFLILL. 2 disordered regions span residues 105–136 and 151–172; these read QAQA…LGGF and GPLV…QLQS.

This sequence belongs to the MRAP family. As to quaternary structure, homodimer and heterodimer. Forms antiparallel homodimers and heterodimers with MRAP2. Interacts with MC1R, MC2R, MC3R, MC4R and MC5R. Expressed in adrenal cortex, testis, breast, thyroid, lymph node, ovary and fat. Expressed in adipose tissues.

The protein localises to the cell membrane. It localises to the endoplasmic reticulum membrane. Modulator of melanocortin receptors (MC1R, MC2R, MC3R, MC4R and MC5R). Acts by increasing ligand-sensitivity of melanocortin receptors and enhancing generation of cAMP by the receptors. Required both for MC2R trafficking to the cell surface of adrenal cells and for signaling in response to corticotropin (ACTH). May be involved in the intracellular trafficking pathways in adipocyte cells. The protein is Melanocortin-2 receptor accessory protein (MRAP) of Homo sapiens (Human).